Consider the following 574-residue polypeptide: Transmembrane protein 108 (574 aa).

A helical membrane pass occupies residues Tyr-9 to Val-29. The tract at residues Glu-31 to Pro-169 is interaction with SH3GL2. Disordered stretches follow at residues Pro-32–Phe-352 and Asp-364–Leu-417. Positions Thr-58–Ser-86 are enriched in polar residues. The segment covering Leu-132–Ala-160 has biased composition (low complexity). An interaction with DST (isoform 1) region spans residues Arg-173–Ser-406. Residues Phe-245–Leu-271 are compositionally biased toward polar residues. The segment covering Thr-292–Pro-312 has biased composition (low complexity). Positions Pro-316–Asp-332 are enriched in polar residues. A helical membrane pass occupies residues Ile-468–Val-488. Residues Cys-489–Ile-574 form an interaction with CYFIP2 region.

As to quaternary structure, interacts with DST (isoform 1). Interacts with SH3GL2. Interacts (via N-terminus) with CYFIP1 and CYFIP2; the interactions associate TMEM108 with the WAVE1 complex. In terms of processing, glycosylated. Expressed in the nervous system tissues, such as hippocampus and spinal cord, is barely detectable in peripheral tissues such as heart, lung, liver, kidney and muscle. In brain, highly expressed in dentate gyrus neurons and expressed in cortex, olfactory bulb, ammon's horn, cerebellum, hypothalamus and striatum.

The protein resides in the membrane. Its subcellular location is the postsynaptic density. The protein localises to the endosome membrane. It is found in the cell projection. It localises to the axon. The protein resides in the dendrite. Its subcellular location is the early endosome. Functionally, transmembrane protein required for proper cognitive functions. Involved in the development of dentate gyrus (DG) neuron circuitry, is necessary for AMPA receptors surface expression and proper excitatory postsynaptic currents of DG granule neurons. Regulates the organization and stability of the microtubule network of sensory neurons to allow axonal transport. Through the interaction with DST, mediates the docking of the dynein/dynactin motor complex to vesicle cargos for retrograde axonal transport. In hippocampal neurons, required for BDNF-dependent dendrite outgrowth. Cooperates with SH3GL2 and recruits the WAVE1 complex to facilitate actin-dependent BDNF:NTRK2 early endocytic trafficking and mediate signaling from early endosomes. The polypeptide is Transmembrane protein 108 (Mus musculus (Mouse)).